We begin with the raw amino-acid sequence, 351 residues long: Aromatic amino acid aminotransferase (351 aa).

K215 is modified (N6-(pyridoxal phosphate)lysine).

Belongs to the class-II pyridoxal-phosphate-dependent aminotransferase family. Homodimer. Pyridoxal 5'-phosphate is required as a cofactor.

It catalyses the reaction an aromatic L-alpha-amino acid + 2-oxoglutarate = an aromatic oxo-acid + L-glutamate. Its function is as follows. Aminotransferase that catalyzes the conversion of aromatic amino acids and 2-oxoglutarate into corresponding aromatic oxo acids and L-glutamate. In Mycolicibacterium vanbaalenii (strain DSM 7251 / JCM 13017 / BCRC 16820 / KCTC 9966 / NRRL B-24157 / PYR-1) (Mycobacterium vanbaalenii), this protein is Aromatic amino acid aminotransferase.